A 214-amino-acid polypeptide reads, in one-letter code: ATP-dependent dethiobiotin synthetase BioD (214 aa).

Residue 10-15 (GIGKTY) participates in ATP binding. Thr14 contributes to the Mg(2+) binding site. Lys35 is an active-site residue. Thr39 is a binding site for substrate. ATP is bound by residues Asp44, 109-112 (EGAG), and 169-170 (NC). Mg(2+) is bound by residues Asp44 and Glu109.

It belongs to the dethiobiotin synthetase family. As to quaternary structure, homodimer. It depends on Mg(2+) as a cofactor.

Its subcellular location is the cytoplasm. It carries out the reaction (7R,8S)-7,8-diammoniononanoate + CO2 + ATP = (4R,5S)-dethiobiotin + ADP + phosphate + 3 H(+). It functions in the pathway cofactor biosynthesis; biotin biosynthesis; biotin from 7,8-diaminononanoate: step 1/2. Functionally, catalyzes a mechanistically unusual reaction, the ATP-dependent insertion of CO2 between the N7 and N8 nitrogen atoms of 7,8-diaminopelargonic acid (DAPA, also called 7,8-diammoniononanoate) to form a ureido ring. This Methanocaldococcus jannaschii (strain ATCC 43067 / DSM 2661 / JAL-1 / JCM 10045 / NBRC 100440) (Methanococcus jannaschii) protein is ATP-dependent dethiobiotin synthetase BioD.